Consider the following 354-residue polypeptide: MTEPLKPRIDFAESLSGPQEPVLKPAQIFNEKETANFCPASPELEAEEREGQVEGIVNAALKPKRSGWRKMVYGSLMLLGLSAVAQFVQWIYQSWQQQDWSALGVAAAGSMIVFAGIGSLVSEWHRLYRLRVRSEERDTARALLQHHGVGKGREFCEKLASQAGIEQHNPALQRWRAALHDTHNDREVVVLYSKWVQPVLDSQVRAEISRCAAESALMIAVSPLAIVDMAFIAWRNIRLINRIAALYGIELGYFSRIRLFRLVLLNIVFSGASEVVREVGMDWLSQDIAARLSVRAAQGIGVGLLTARLGIKAMELCRPLPWIEGDKPKLGDFRRQLITQLKNILPNKSKNIVN.

A run of 3 helical transmembrane segments spans residues 71 to 91 (MVYG…VQWI), 101 to 121 (SALG…GSLV), and 214 to 234 (ESAL…FIAW).

This sequence belongs to the UPF0283 family.

Its subcellular location is the cell inner membrane. This is UPF0283 membrane protein plu2581 from Photorhabdus laumondii subsp. laumondii (strain DSM 15139 / CIP 105565 / TT01) (Photorhabdus luminescens subsp. laumondii).